The chain runs to 218 residues: Thiamine-phosphate synthase (218 aa).

4-amino-2-methyl-5-(diphosphooxymethyl)pyrimidine is bound by residues 43 to 47 (QLRMK) and Asn75. The Mg(2+) site is built by Asp76 and Asp95. 4-amino-2-methyl-5-(diphosphooxymethyl)pyrimidine is bound at residue Thr114. 140-142 (TST) provides a ligand contact to 2-[(2R,5Z)-2-carboxy-4-methylthiazol-5(2H)-ylidene]ethyl phosphate. Lys143 contributes to the 4-amino-2-methyl-5-(diphosphooxymethyl)pyrimidine binding site. 2-[(2R,5Z)-2-carboxy-4-methylthiazol-5(2H)-ylidene]ethyl phosphate-binding positions include Gly171 and 191–192 (VS).

It belongs to the thiamine-phosphate synthase family. Mg(2+) is required as a cofactor.

The catalysed reaction is 2-[(2R,5Z)-2-carboxy-4-methylthiazol-5(2H)-ylidene]ethyl phosphate + 4-amino-2-methyl-5-(diphosphooxymethyl)pyrimidine + 2 H(+) = thiamine phosphate + CO2 + diphosphate. The enzyme catalyses 2-(2-carboxy-4-methylthiazol-5-yl)ethyl phosphate + 4-amino-2-methyl-5-(diphosphooxymethyl)pyrimidine + 2 H(+) = thiamine phosphate + CO2 + diphosphate. It catalyses the reaction 4-methyl-5-(2-phosphooxyethyl)-thiazole + 4-amino-2-methyl-5-(diphosphooxymethyl)pyrimidine + H(+) = thiamine phosphate + diphosphate. Its pathway is cofactor biosynthesis; thiamine diphosphate biosynthesis; thiamine phosphate from 4-amino-2-methyl-5-diphosphomethylpyrimidine and 4-methyl-5-(2-phosphoethyl)-thiazole: step 1/1. Functionally, condenses 4-methyl-5-(beta-hydroxyethyl)thiazole monophosphate (THZ-P) and 2-methyl-4-amino-5-hydroxymethyl pyrimidine pyrophosphate (HMP-PP) to form thiamine monophosphate (TMP). This Myxococcus xanthus (strain DK1622) protein is Thiamine-phosphate synthase.